Reading from the N-terminus, the 191-residue chain is UPF0149 protein VV2847 (191 aa).

The protein belongs to the UPF0149 family.

This is UPF0149 protein VV2847 from Vibrio vulnificus (strain YJ016).